Reading from the N-terminus, the 601-residue chain is Terpinolene synthase, chloroplastic (601 aa).

The transit peptide at 1–32 (MSTFVISNSMHVGISFSFLHKLPQTPPPQVVC) directs the protein to the chloroplast. Positions 354, 358, 498, 502, and 506 each coordinate Mg(2+). A DDXXD motif motif is present at residues 354–358 (DDVYD).

It belongs to the terpene synthase family. Tpsd subfamily. Mg(2+) is required as a cofactor. Requires Mn(2+) as cofactor.

Its subcellular location is the plastid. It localises to the chloroplast. The catalysed reaction is (2E)-geranyl diphosphate = terpinolene + diphosphate. It participates in secondary metabolite biosynthesis; terpenoid biosynthesis. Monoterpene synthase that catalyzes the formation of terpinolene and other monoterpenes from geranyl diphosphate. The sequence is that of Terpinolene synthase, chloroplastic (TES) from Ocimum basilicum (Sweet basil).